Reading from the N-terminus, the 115-residue chain is Peptidyl-tRNA hydrolase (115 aa).

It belongs to the PTH2 family.

It localises to the cytoplasm. The enzyme catalyses an N-acyl-L-alpha-aminoacyl-tRNA + H2O = an N-acyl-L-amino acid + a tRNA + H(+). The natural substrate for this enzyme may be peptidyl-tRNAs which drop off the ribosome during protein synthesis. The protein is Peptidyl-tRNA hydrolase of Methanococcoides burtonii (strain DSM 6242 / NBRC 107633 / OCM 468 / ACE-M).